Reading from the N-terminus, the 91-residue chain is Proline, histidine and glycine-rich protein 1 (91 aa).

The segment at 1–91 is disordered; the sequence is MHPGGKGHCG…HCGPHPGPHH (91 aa). Gly residues-rich tracts occupy residues 33–42, 49–63, and 70–82; these read HPGHGPGHCP, GHGGPSHGHGPGHCP, and GHGGPSHGHGPGH.

This chain is Proline, histidine and glycine-rich protein 1 (Phgr1), found in Mus musculus (Mouse).